Consider the following 179-residue polypeptide: Large ribosomal subunit protein uL5 (179 aa).

This sequence belongs to the universal ribosomal protein uL5 family. Part of the 50S ribosomal subunit; part of the 5S rRNA/L5/L18/L25 subcomplex. Contacts the 5S rRNA and the P site tRNA. Forms a bridge to the 30S subunit in the 70S ribosome.

This is one of the proteins that bind and probably mediate the attachment of the 5S RNA into the large ribosomal subunit, where it forms part of the central protuberance. In the 70S ribosome it contacts protein S13 of the 30S subunit (bridge B1b), connecting the 2 subunits; this bridge is implicated in subunit movement. Contacts the P site tRNA; the 5S rRNA and some of its associated proteins might help stabilize positioning of ribosome-bound tRNAs. This Polaromonas naphthalenivorans (strain CJ2) protein is Large ribosomal subunit protein uL5.